Consider the following 989-residue polypeptide: Zinc finger SWIM domain-containing protein 4 (989 aa).

Positions 1–32 are disordered; sequence MEPPAAKRSRGCPAGPEERDAGAGAARGRGRP. Residues 139–176 form an SWIM-type zinc finger; sequence YHVSISFDRCKITSVSCGCDNRDLFYCAHVVALSLYRI.

This Homo sapiens (Human) protein is Zinc finger SWIM domain-containing protein 4 (ZSWIM4).